The chain runs to 804 residues: Leucine--tRNA ligase (804 aa).

The 'HIGH' region motif lies at 40–51 (PYPSGAGLHVGH). Residues 576-580 (KMSKS) carry the 'KMSKS' region motif. Lys579 is an ATP binding site.

This sequence belongs to the class-I aminoacyl-tRNA synthetase family.

It is found in the cytoplasm. The catalysed reaction is tRNA(Leu) + L-leucine + ATP = L-leucyl-tRNA(Leu) + AMP + diphosphate. This chain is Leucine--tRNA ligase, found in Bacillus velezensis (strain DSM 23117 / BGSC 10A6 / LMG 26770 / FZB42) (Bacillus amyloliquefaciens subsp. plantarum).